The chain runs to 292 residues: 4-hydroxy-tetrahydrodipicolinate synthase (292 aa).

Residue Thr-44 participates in pyruvate binding. The active-site Proton donor/acceptor is Tyr-132. Residue Lys-161 is the Schiff-base intermediate with substrate of the active site. Ile-203 contacts pyruvate.

Belongs to the DapA family. As to quaternary structure, homotetramer.

It is found in the cytoplasm. The enzyme catalyses L-aspartate 4-semialdehyde + pyruvate = (2S,4S)-4-hydroxy-2,3,4,5-tetrahydrodipicolinate + H2O + H(+). It participates in amino-acid biosynthesis; L-lysine biosynthesis via DAP pathway; (S)-tetrahydrodipicolinate from L-aspartate: step 3/4. Is feedback inhibited by lysine. Is competitively inhibited by 2-oxobutyrate with respect to pyruvate. Its function is as follows. Catalyzes the condensation of (S)-aspartate-beta-semialdehyde [(S)-ASA] and pyruvate to 4-hydroxy-tetrahydrodipicolinate (HTPA). The sequence is that of 4-hydroxy-tetrahydrodipicolinate synthase from Rhizobium meliloti (Ensifer meliloti).